The following is a 155-amino-acid chain: Small ribosomal subunit protein uS7c (155 aa).

This sequence belongs to the universal ribosomal protein uS7 family. As to quaternary structure, part of the 30S ribosomal subunit.

The protein localises to the plastid. The protein resides in the chloroplast. In terms of biological role, one of the primary rRNA binding proteins, it binds directly to 16S rRNA where it nucleates assembly of the head domain of the 30S subunit. The chain is Small ribosomal subunit protein uS7c (rps7) from Stewartia pseudocamellia (Japanese stewartia).